The sequence spans 382 residues: Heme A synthase (382 aa).

The next 8 membrane-spanning stretches (helical) occupy residues 25-45 (GAVR…VAVG), 112-132 (LLGR…WARG), 141-161 (GLLG…IMVA), 176-196 (LALH…LAAG), 211-231 (VVAC…GLVA), 270-290 (LALV…VAIA), 303-323 (AAAG…GLGI), and 327-347 (LLHV…AVLI). His-277 lines the heme pocket. His-338 is a binding site for heme.

It belongs to the COX15/CtaA family. Type 2 subfamily. As to quaternary structure, interacts with CtaB. Heme b is required as a cofactor.

The protein resides in the cell membrane. It catalyses the reaction Fe(II)-heme o + 2 A + H2O = Fe(II)-heme a + 2 AH2. Its pathway is porphyrin-containing compound metabolism; heme A biosynthesis; heme A from heme O: step 1/1. Functionally, catalyzes the conversion of heme O to heme A by two successive hydroxylations of the methyl group at C8. The first hydroxylation forms heme I, the second hydroxylation results in an unstable dihydroxymethyl group, which spontaneously dehydrates, resulting in the formyl group of heme A. This chain is Heme A synthase, found in Methylorubrum extorquens (strain CM4 / NCIMB 13688) (Methylobacterium extorquens).